Consider the following 428-residue polypeptide: Enolase (428 aa).

Gln163 provides a ligand contact to (2R)-2-phosphoglycerate. Glu205 (proton donor) is an active-site residue. Residues Asp242, Glu285, and Asp312 each coordinate Mg(2+). Positions 337, 366, 367, and 388 each coordinate (2R)-2-phosphoglycerate. Lys337 (proton acceptor) is an active-site residue.

Belongs to the enolase family. It depends on Mg(2+) as a cofactor.

It localises to the cytoplasm. The protein resides in the secreted. Its subcellular location is the cell surface. The catalysed reaction is (2R)-2-phosphoglycerate = phosphoenolpyruvate + H2O. Its pathway is carbohydrate degradation; glycolysis; pyruvate from D-glyceraldehyde 3-phosphate: step 4/5. Functionally, catalyzes the reversible conversion of 2-phosphoglycerate (2-PG) into phosphoenolpyruvate (PEP). It is essential for the degradation of carbohydrates via glycolysis. This chain is Enolase, found in Moorella thermoacetica (strain ATCC 39073 / JCM 9320).